The primary structure comprises 559 residues: Cocaine esterase (559 aa).

The signal sequence occupies residues 1–26 (MRLHRLRARLSAVACGLLLLLVRGQG). A Pyrrolidone carboxylic acid modification is found at glutamine 27. The cysteines at positions 95 and 123 are disulfide-linked. A glycan (N-linked (GlcNAc...) asparagine) is linked at asparagine 111. Residue serine 228 is the Acyl-ester intermediate of the active site. The N-linked (GlcNAc...) asparagine glycan is linked to asparagine 276. Cysteines 280 and 291 form a disulfide. Active-site charge relay system residues include glutamate 345 and histidine 457. Residues 556 to 559 (HTEL) carry the Prevents secretion from ER motif.

Belongs to the type-B carboxylesterase/lipase family. Monomer. Post-translationally, glycosylated. As to expression, preferentially expressed in intestine with moderate expression in liver. Within the intestine, highest expression is found in small intestine with lower expression in colon and rectum.

It localises to the endoplasmic reticulum lumen. The enzyme catalyses cocaine + H2O = ecgonine methyl ester + benzoate + H(+). It carries out the reaction a carboxylic ester + H2O = an alcohol + a carboxylate + H(+). It catalyses the reaction 4-methylumbelliferyl acetate + H2O = 4-methylumbelliferone + acetate + H(+). The catalysed reaction is 2-(5Z,8Z,11Z,14Z-eicosatetraenoyl)-glycerol + H2O = glycerol + (5Z,8Z,11Z,14Z)-eicosatetraenoate + H(+). The enzyme catalyses prostaglandin E2 1-glyceryl ester + H2O = prostaglandin E2 + glycerol + H(+). It carries out the reaction prostaglandin F2alpha 1-glyceryl ester + H2O = prostaglandin F2alpha + glycerol + H(+). Functionally, involved in the detoxification of xenobiotics and in the activation of ester and amide prodrugs. Shows high catalytic efficiency for hydrolysis of cocaine, 4-methylumbelliferyl acetate, heroin and 6-monoacetylmorphine. Hydrolyzes aspirin, substrates with large alcohol group and small acyl group and endogenous lipids such as triacylglycerol. Converts monoacylglycerides to free fatty acids and glycerol. Hydrolyzes of 2-arachidonoylglycerol and prostaglandins. This Homo sapiens (Human) protein is Cocaine esterase.